A 238-amino-acid chain; its full sequence is Probable septum site-determining protein MinC (238 aa).

This sequence belongs to the MinC family. As to quaternary structure, interacts with MinD and FtsZ.

In terms of biological role, cell division inhibitor that blocks the formation of polar Z ring septums. Rapidly oscillates between the poles of the cell to destabilize FtsZ filaments that have formed before they mature into polar Z rings. Prevents FtsZ polymerization. The sequence is that of Probable septum site-determining protein MinC from Aeromonas salmonicida (strain A449).